Consider the following 888-residue polypeptide: Autotaxin (888 aa).

The N-terminal stretch at 1 to 27 is a signal peptide; it reads MARRRSCQLHQVISLFTFAVGVNICLG. The propeptide at 28–35 is removed by furin; the sequence is VTANRIKR. Asn-54 carries an N-linked (GlcNAc...) asparagine glycan. 2 SMB domains span residues 55-98 and 99-143; these read ISGS…LKTA and GGWE…GESH. Disulfide bonds link Cys-59–Cys-76, Cys-63–Cys-94, Cys-74–Cys-87, Cys-80–Cys-86, Cys-103–Cys-120, Cys-108–Cys-138, Cys-118–Cys-131, Cys-124–Cys-130, Cys-149–Cys-195, and Cys-157–Cys-351. The Cell attachment site motif lies at 127–129; sequence RGD. The interval 145 to 502 is phosphodiesterase; that stretch reads VDDDCEEIKT…PTFKYKTKVP (358 aa). Residues Asp-172 and Thr-210 each coordinate Zn(2+). Thr-210 functions as the Nucleophile in the catalytic mechanism. 1-(9Z-octadecenoyl)-sn-glycero-3-phosphate-binding residues include Thr-210, Asn-231, and Asp-312. 1-hexadecanoyl-sn-glycero-3-phosphate is bound by residues Thr-210, Asn-231, and Asp-312. 1-tetradecanoyl-sn-glycerol 3-phosphate contacts are provided by Thr-210, Asn-231, and Asp-312. Zn(2+) contacts are provided by Asp-312, His-316, Asp-359, and His-360. Disulfide bonds link Cys-367-Cys-469, Cys-414-Cys-831, Cys-567-Cys-692, Cys-569-Cys-677, and Cys-800-Cys-810. An N-linked (GlcNAc...) asparagine glycan is attached at Asn-411. His-475 serves as a coordination point for Zn(2+). Residue His-475 participates in 1-(9Z-octadecenoyl)-sn-glycero-3-phosphate binding. His-475 serves as a coordination point for 1-hexadecanoyl-sn-glycero-3-phosphate. A 1-tetradecanoyl-sn-glycerol 3-phosphate-binding site is contributed by His-475. Residue Asn-525 is glycosylated (N-linked (GlcNAc...) asparagine). The segment at 623-888 is nuclease-like domain; it reads LYGRPAVLYR…TYLQTYESEI (266 aa). 5 residues coordinate Ca(2+): Asp-765, Asp-767, Asp-769, Leu-771, and Asp-773. A glycan (N-linked (GlcNAc...) asparagine) is linked at Asn-832. The required for secretion stretch occupies residues 855–876; sequence IEHLTSLDFFRKTSRSYPEILT.

The protein belongs to the nucleotide pyrophosphatase/phosphodiesterase family. The cofactor is Zn(2+). Ca(2+) serves as cofactor. N-glycosylation, but not furin-cleavage, plays a critical role on secretion and on lysoPLD activity. Post-translationally, the interdomain disulfide bond between Cys-414 and Cys-831 is essential for catalytic activity. In terms of tissue distribution, detected in fetal serum (at protein level).

Its subcellular location is the secreted. It carries out the reaction a 1-O-alkyl-sn-glycero-3-phosphoethanolamine + H2O = a 1-O-alkyl-sn-glycero-3-phosphate + ethanolamine + H(+). It catalyses the reaction a 1-acyl-sn-glycero-3-phosphoethanolamine + H2O = a 1-acyl-sn-glycero-3-phosphate + ethanolamine + H(+). The catalysed reaction is 1-(9Z-octadecenoyl)-sn-glycero-3-phosphoethanolamine + H2O = 1-(9Z-octadecenoyl)-sn-glycero-3-phosphate + ethanolamine + H(+). The enzyme catalyses a 1-O-alkyl-sn-glycero-3-phosphocholine + H2O = a 1-O-alkyl-sn-glycero-3-phosphate + choline + H(+). It carries out the reaction 1-O-(9Z-octadecenyl)-sn-glycero-3-phosphocholine + H2O = 1-O-(9Z-octadecenyl)-sn-glycero-3-phosphate + choline + H(+). It catalyses the reaction 1-O-hexadecyl-sn-glycero-3-phosphocholine + H2O = 1-O-hexadecyl-sn-glycero-3-phosphate + choline + H(+). The catalysed reaction is a 1-O-(1Z-alkenyl)-sn-glycero-3-phosphocholine + H2O = a 1-O-(1Z-alkenyl)-sn-glycero-3-phosphate + choline + H(+). The enzyme catalyses a 1-acyl-sn-glycero-3-phosphocholine + H2O = a 1-acyl-sn-glycero-3-phosphate + choline + H(+). It carries out the reaction 1-dodecanoyl-sn-glycero-3-phosphocholine + H2O = 1-dodecanoyl-sn-glycerol 3-phosphate + choline + H(+). It catalyses the reaction 1-(9Z-octadecenoyl)-sn-glycero-3-phosphocholine + H2O = 1-(9Z-octadecenoyl)-sn-glycero-3-phosphate + choline + H(+). The catalysed reaction is 1-tetradecanoyl-sn-glycero-3-phosphocholine + H2O = 1-tetradecanoyl-sn-glycerol 3-phosphate + choline + H(+). The enzyme catalyses 1-decanoyl-sn-glycero-3-phosphocholine + H2O = 1-decanoyl-sn-glycero-3-phosphate + choline + H(+). It carries out the reaction 1-octadecanoyl-sn-glycero-3-phosphocholine + H2O = 1-octadecanoyl-sn-glycero-3-phosphate + choline + H(+). It catalyses the reaction 1-hexadecanoyl-sn-glycero-3-phosphocholine + H2O = 1-hexadecanoyl-sn-glycero-3-phosphate + choline + H(+). The catalysed reaction is 1-hexanoyl-sn-glycero-3-phosphocholine + H2O = 1-hexanoyl-sn-glycero-3-phosphate + choline + H(+). The enzyme catalyses 1-(9Z,12Z)-octadecadienoyl-sn-glycero-3-phosphocholine + H2O = 1-(9Z,12Z)-octadecadienoyl-sn-glycero-3-phosphate + choline + H(+). It carries out the reaction sphing-4-enine-phosphocholine + H2O = sphing-4-enine 1-phosphate + choline + H(+). It catalyses the reaction 1-(5Z,8Z,11Z,14Z-eicosatetraenoyl)-sn-glycero-3-phosphocholine + H2O = 1-(5Z,8Z,11Z,14Z-eicosatetraenoyl)-sn-glycero-3-phosphate + choline + H(+). The catalysed reaction is a 2-acyl-sn-glycero-3-phosphocholine + H2O = a 2-acyl-sn-glycerol 3-phosphate + choline + H(+). The enzyme catalyses a 1,2-diacyl-sn-glycero-3-phosphocholine + H2O = a 1,2-diacyl-sn-glycero-3-phosphate + choline + H(+). It carries out the reaction 1,2-dioctanoyl-sn-glycero-3-phosphocholine + H2O = 1,2-dioctanoyl-sn-glycero-3-phosphate + choline + H(+). It catalyses the reaction 1,2-didecanoyl-sn-glycero-3-phosphocholine + H2O = 1,2-didecanoyl-sn-glycero-3-phosphate + choline + H(+). The catalysed reaction is a 1-acyl-sn-glycero-3-phospho-L-serine + H2O = a 1-acyl-sn-glycero-3-phosphate + L-serine + H(+). The enzyme catalyses 1-(9Z-octadecenoyl)-sn-glycero-3-phospho-L-serine + H2O = 1-(9Z-octadecenoyl)-sn-glycero-3-phosphate + L-serine + H(+). It carries out the reaction a 2-acyl-sn-glycero-3-phospho-L-serine + H2O = a 2-acyl-sn-glycerol 3-phosphate + L-serine + H(+). Secreted lysophospholipase D that hydrolyzes lysophospholipids to produce the signaling molecule lysophosphatidic acid (LPA) in extracellular fluids. Its major substrate is lysophosphatidylcholine. Can also act on sphingosylphosphorylcholine producing sphingosine-1-phosphate, a modulator of cell motility. Can hydrolyze, in vitro, bis-pNPP, to some extent pNP-TMP, and barely ATP. Involved in several motility-related processes such as angiogenesis and neurite outgrowth. Acts as an angiogenic factor by stimulating migration of smooth muscle cells and microtubule formation. Stimulates migration of melanoma cells, probably via a pertussis toxin-sensitive G protein. May have a role in induction of parturition. Possible involvement in cell proliferation and adipose tissue development. Required for LPA production in activated platelets, cleaves the sn-1 lysophospholipids to generate sn-1 lysophosphatidic acids containing predominantly 18:2 and 20:4 fatty acids. Shows a preference for the sn-1 to the sn-2 isomer of 1-O-alkyl-sn-glycero-3-phosphocholine (lyso-PAF). This Bos taurus (Bovine) protein is Autotaxin.